We begin with the raw amino-acid sequence, 95 residues long: MSLNTHDVKRIAHLARIAVSEEEAEATLVKLSGILGLIEEMQAVDTSGIVPMSHSQDVTQRLREDVVTESNQRDLLQSIAPAVENGLYLVPKVIE.

The protein belongs to the GatC family. As to quaternary structure, heterotrimer of A, B and C subunits.

The catalysed reaction is L-glutamyl-tRNA(Gln) + L-glutamine + ATP + H2O = L-glutaminyl-tRNA(Gln) + L-glutamate + ADP + phosphate + H(+). It carries out the reaction L-aspartyl-tRNA(Asn) + L-glutamine + ATP + H2O = L-asparaginyl-tRNA(Asn) + L-glutamate + ADP + phosphate + 2 H(+). Its function is as follows. Allows the formation of correctly charged Asn-tRNA(Asn) or Gln-tRNA(Gln) through the transamidation of misacylated Asp-tRNA(Asn) or Glu-tRNA(Gln) in organisms which lack either or both of asparaginyl-tRNA or glutaminyl-tRNA synthetases. The reaction takes place in the presence of glutamine and ATP through an activated phospho-Asp-tRNA(Asn) or phospho-Glu-tRNA(Gln). This is Aspartyl/glutamyl-tRNA(Asn/Gln) amidotransferase subunit C from Methylobacillus flagellatus (strain ATCC 51484 / DSM 6875 / VKM B-1610 / KT).